Consider the following 618-residue polypeptide: 1-deoxy-D-xylulose-5-phosphate synthase (618 aa).

Residues His76 and Gly117–Ser119 contribute to the thiamine diphosphate site. Residue Asp148 coordinates Mg(2+). Thiamine diphosphate-binding positions include Gly149 to Ala150, Asn177, Tyr284, and Glu364. Asn177 is a Mg(2+) binding site.

Belongs to the transketolase family. DXPS subfamily. In terms of assembly, homodimer. Requires Mg(2+) as cofactor. Thiamine diphosphate is required as a cofactor.

The enzyme catalyses D-glyceraldehyde 3-phosphate + pyruvate + H(+) = 1-deoxy-D-xylulose 5-phosphate + CO2. The protein operates within metabolic intermediate biosynthesis; 1-deoxy-D-xylulose 5-phosphate biosynthesis; 1-deoxy-D-xylulose 5-phosphate from D-glyceraldehyde 3-phosphate and pyruvate: step 1/1. Functionally, catalyzes the acyloin condensation reaction between C atoms 2 and 3 of pyruvate and glyceraldehyde 3-phosphate to yield 1-deoxy-D-xylulose-5-phosphate (DXP). The protein is 1-deoxy-D-xylulose-5-phosphate synthase of Francisella philomiragia subsp. philomiragia (strain ATCC 25017 / CCUG 19701 / FSC 153 / O#319-036).